The primary structure comprises 240 residues: 7-cyano-7-deazaguanine synthase (240 aa).

14–24 (FSGGQDSATCL) serves as a coordination point for ATP. Cys202, Cys217, Cys220, and Cys223 together coordinate Zn(2+).

This sequence belongs to the QueC family. Zn(2+) serves as cofactor.

It catalyses the reaction 7-carboxy-7-deazaguanine + NH4(+) + ATP = 7-cyano-7-deazaguanine + ADP + phosphate + H2O + H(+). Its pathway is purine metabolism; 7-cyano-7-deazaguanine biosynthesis. In terms of biological role, catalyzes the ATP-dependent conversion of 7-carboxy-7-deazaguanine (CDG) to 7-cyano-7-deazaguanine (preQ(0)). In Rhodopseudomonas palustris (strain BisB18), this protein is 7-cyano-7-deazaguanine synthase.